Consider the following 28-residue polypeptide: Peptide 2 (28 aa).

This sequence belongs to the short scorpion toxin superfamily. Potassium channel inhibitor family. Alpha-KTx 09 subfamily. In terms of tissue distribution, expressed by the venom gland.

Its subcellular location is the secreted. Functionally, blocks potassium channels. This chain is Peptide 2, found in Hottentotta tamulus sindicus (Scorpion).